The sequence spans 101 residues: Small ribosomal subunit protein uS14 (101 aa).

It belongs to the universal ribosomal protein uS14 family. Part of the 30S ribosomal subunit. Contacts proteins S3 and S10.

Functionally, binds 16S rRNA, required for the assembly of 30S particles and may also be responsible for determining the conformation of the 16S rRNA at the A site. The polypeptide is Small ribosomal subunit protein uS14 (Acinetobacter baumannii (strain AB307-0294)).